The primary structure comprises 571 residues: Proline--tRNA ligase (571 aa).

This sequence belongs to the class-II aminoacyl-tRNA synthetase family. ProS type 1 subfamily. In terms of assembly, homodimer.

It localises to the cytoplasm. It carries out the reaction tRNA(Pro) + L-proline + ATP = L-prolyl-tRNA(Pro) + AMP + diphosphate. Catalyzes the attachment of proline to tRNA(Pro) in a two-step reaction: proline is first activated by ATP to form Pro-AMP and then transferred to the acceptor end of tRNA(Pro). As ProRS can inadvertently accommodate and process non-cognate amino acids such as alanine and cysteine, to avoid such errors it has two additional distinct editing activities against alanine. One activity is designated as 'pretransfer' editing and involves the tRNA(Pro)-independent hydrolysis of activated Ala-AMP. The other activity is designated 'posttransfer' editing and involves deacylation of mischarged Ala-tRNA(Pro). The misacylated Cys-tRNA(Pro) is not edited by ProRS. This Pseudomonas paraeruginosa (strain DSM 24068 / PA7) (Pseudomonas aeruginosa (strain PA7)) protein is Proline--tRNA ligase.